The chain runs to 302 residues: Nucleotide-binding protein Bamb_2855 (302 aa).

Residue 8-15 participates in ATP binding; it reads GISGSGKS. 57 to 60 contributes to the GTP binding site; that stretch reads DARS.

The protein belongs to the RapZ-like family.

Functionally, displays ATPase and GTPase activities. In Burkholderia ambifaria (strain ATCC BAA-244 / DSM 16087 / CCUG 44356 / LMG 19182 / AMMD) (Burkholderia cepacia (strain AMMD)), this protein is Nucleotide-binding protein Bamb_2855.